The following is a 343-amino-acid chain: Heat-inducible transcription repressor HrcA (343 aa).

This sequence belongs to the HrcA family.

Its function is as follows. Negative regulator of class I heat shock genes (grpE-dnaK-dnaJ and groELS operons). Prevents heat-shock induction of these operons. This is Heat-inducible transcription repressor HrcA from Mycobacterium ulcerans (strain Agy99).